A 360-amino-acid chain; its full sequence is SVP1-like protein 2 (360 aa).

3 WD repeats span residues Ala-12–Lys-50, Ala-191–Glu-231, and Leu-236–Glu-275.

The protein belongs to the WD repeat PROPPIN family.

It is found in the vacuole membrane. It localises to the cytoplasmic vesicle membrane. Functionally, involved in mitochondrial or peroxisomal functions and amino acid signaling pathways. The sequence is that of SVP1-like protein 2 (HSV2) from Pichia angusta (Yeast).